The chain runs to 530 residues: Estrogen receptor beta (530 aa).

The interval 1-148 (MEIKNSPSSL…SPNAKRDAHF (148 aa)) is modulating. Serine 61 carries the phosphoserine; alternate modification. Serine 61 is a glycosylation site (O-linked (GlcNAc) serine; alternate). Phosphoserine; by MAPK occurs at positions 87 and 105. NR C4-type zinc fingers lie at residues 149 to 169 (CPVC…CEGC) and 185 to 209 (CPAT…LRKC). Positions 149–214 (CPVCSDYASG…RLRKCYEVGM (66 aa)) form a DNA-binding region, nuclear receptor. One can recognise an NR LBD domain in the interval 264–498 (SPEQLVLTLL…DLLLEMLNAH (235 aa)). Positions 506 to 515 (SISGSECSST) are enriched in low complexity. A disordered region spans residues 506–530 (SISGSECSSTEDSKNKESSQNLQSQ).

Belongs to the nuclear hormone receptor family. NR3 subfamily. In terms of assembly, binds DNA as a homodimer. Can form a heterodimer with ESR1. Interacts with NCOA1, NCOA3, NCOA5 and NCOA6 coactivators, leading to a strong increase of transcription of target genes. Interacts with UBE1C and AKAP13. Interacts with DNTTIP2. Interacts with CCDC62 in the presence of estradiol/E2; this interaction seems to enhance the transcription of target genes. Interacts with PRMT2. Interacts with CCAR2 (via N-terminus) in a ligand-independent manner. Interacts with DNAAF4. Interacts with RBM39, in the presence of estradiol (E2). Interacts with STUB1/CHIP. In terms of processing, phosphorylation at Ser-87 and Ser-105 recruits NCOA1. As to expression, expressed in the CA1 region of the hippocampus, expression decreases with age (at protein level). Expressed in prostate, ovary, lung, liver, kidney, fat, bone, brain, uterus and testis.

The protein localises to the nucleus. In terms of biological role, nuclear hormone receptor. Binds estrogens with an affinity similar to that of ESR1/ER-alpha, and activates expression of reporter genes containing estrogen response elements (ERE) in an estrogen-dependent manner. Its function is as follows. Lacks ligand binding affinity and suppresses ESR1/ER-alpha and ESR2 isoform 1/ER-beta1 mediated transcriptional activation and may act as a dominant negative regulator of estrogen action. Functionally, unable to bind DNA and activate transcription due to the truncation of the DNA binding domain. The protein is Estrogen receptor beta (Esr2) of Rattus norvegicus (Rat).